The following is a 214-amino-acid chain: ATP phosphoribosyltransferase (214 aa).

Belongs to the ATP phosphoribosyltransferase family. Short subfamily. Heteromultimer composed of HisG and HisZ subunits.

It is found in the cytoplasm. It carries out the reaction 1-(5-phospho-beta-D-ribosyl)-ATP + diphosphate = 5-phospho-alpha-D-ribose 1-diphosphate + ATP. The protein operates within amino-acid biosynthesis; L-histidine biosynthesis; L-histidine from 5-phospho-alpha-D-ribose 1-diphosphate: step 1/9. In terms of biological role, catalyzes the condensation of ATP and 5-phosphoribose 1-diphosphate to form N'-(5'-phosphoribosyl)-ATP (PR-ATP). Has a crucial role in the pathway because the rate of histidine biosynthesis seems to be controlled primarily by regulation of HisG enzymatic activity. This Methylibium petroleiphilum (strain ATCC BAA-1232 / LMG 22953 / PM1) protein is ATP phosphoribosyltransferase.